We begin with the raw amino-acid sequence, 504 residues long: MNIKPEEITSIIKKEIEKYEKQIKTVDSGTIIQVGDGVSRVYGLDDCMEGELLEFPNDVYGMALNLEQDNVGCVLLGNEEGIKEGDIVKGSGKIVEVPVGEALIGRVVNSLGEELDGKGPINTNQTRPIEVKAPSIIDRSSVNEPLQTGIKAIDSMIPIGKGQRELIIGDRQTGKTALVIDTILNQKGKDVICIYVAIGQKQSTVAHIVNTLTEMGAMDYSIIVSSTAADSAPLQYLAPYAGCSIGEYFMNQGKDVLIVYDDLSKHAVAYRTMSLLLRRPPGREAYPGDVFYIHSRLLERAAKLSKENGGGSLTALPIIETLAGDITAYIPTNVISITDGQIFLESDLFNSGQRPAVNAGISVSRVGGNAQIKAMKQVTGTLRLELAQYRELAAFAQFGSDLDKDSKKRLEKGKRLVEILKQDQYKPLEVEKQVIILYTAVNDFLSDIKVEDIKKFEKELLEYVDTHYRELGRQIAEEKVLTDEIKAKLEVAIVEFKKIFLQEA.

ATP is bound at residue 169–176; the sequence is GDRQTGKT.

It belongs to the ATPase alpha/beta chains family. As to quaternary structure, F-type ATPases have 2 components, CF(1) - the catalytic core - and CF(0) - the membrane proton channel. CF(1) has five subunits: alpha(3), beta(3), gamma(1), delta(1), epsilon(1). CF(0) has three main subunits: a(1), b(2) and c(9-12). The alpha and beta chains form an alternating ring which encloses part of the gamma chain. CF(1) is attached to CF(0) by a central stalk formed by the gamma and epsilon chains, while a peripheral stalk is formed by the delta and b chains.

The protein resides in the cell membrane. It carries out the reaction ATP + H2O + 4 H(+)(in) = ADP + phosphate + 5 H(+)(out). Produces ATP from ADP in the presence of a proton gradient across the membrane. The alpha chain is a regulatory subunit. The sequence is that of ATP synthase subunit alpha from Clostridium botulinum (strain Eklund 17B / Type B).